The sequence spans 301 residues: Acetylglutamate kinase (301 aa).

Substrate contacts are provided by residues 68–69 (GG), R90, and N195.

It belongs to the acetylglutamate kinase family. ArgB subfamily.

The protein localises to the cytoplasm. It carries out the reaction N-acetyl-L-glutamate + ATP = N-acetyl-L-glutamyl 5-phosphate + ADP. The protein operates within amino-acid biosynthesis; L-arginine biosynthesis; N(2)-acetyl-L-ornithine from L-glutamate: step 2/4. Functionally, catalyzes the ATP-dependent phosphorylation of N-acetyl-L-glutamate. The sequence is that of Acetylglutamate kinase from Ectopseudomonas mendocina (strain ymp) (Pseudomonas mendocina).